An 897-amino-acid chain; its full sequence is Cytokine receptor common subunit beta (897 aa).

Positions 1-16 (MVLAQGLLSMALLALC) are cleaved as a signal peptide. Residues 17-443 (WERSLAGAEE…WDTESVLPMW (427 aa)) lie on the Extracellular side of the membrane. The cysteines at positions 35 and 45 are disulfide-linked. The N-linked (GlcNAc...) asparagine glycan is linked to N58. Cystine bridges form between C75–C96 and C86–C91. In terms of domain architecture, Fibronectin type-III 1 spans 133-240 (PPEPRDLQIS…PEVCWDSQPG (108 aa)). The N-linked (GlcNAc...) asparagine glycan is linked to N191. Cystine bridges form between C250-C260 and C289-C306. One can recognise a Fibronectin type-III 2 domain in the interval 339 to 436 (QMAPPSLNVT…EWSEARSWDT (98 aa)). The N-linked (GlcNAc...) asparagine glycan is linked to N346. Residues 425-429 (WSEWS) carry the WSXWS motif motif. The helical transmembrane segment at 444–460 (VLALIVIFLTIAVLLAL) threads the bilayer. Topologically, residues 461–897 (RFCGIYGYRL…WEVNKPGEVC (437 aa)) are cytoplasmic. Positions 474 to 482 (WEEKIPNPS) match the Box 1 motif motif. Disordered stretches follow at residues 498-517 (GSMSAFTSGSPPHQGPWGSR), 532-630 (SEVS…EYLC), 648-812 (PGQA…QPEG), and 830-849 (PGPLSLRSKPSSPGPGPEIK). Over residues 564 to 574 (EQPPSPQPGPP) the composition is skewed to pro residues. The span at 723-752 (SGASSVSLVPSLGLPSDQTPSLCPGLASGP) shows a compositional bias: low complexity. The residue at position 766 (Y766) is a Phosphotyrosine. A compositionally biased stretch (low complexity) spans 830 to 840 (PGPLSLRSKPS).

It belongs to the type I cytokine receptor family. Type 4 subfamily. As to quaternary structure, heterodimer of an alpha and a beta subunit. The beta subunit is common to the IL3, IL5 and GM-CSF receptors. The signaling GM-CSF receptor complex is a dodecamer of two head-to-head hexamers of two alpha, two beta, and two ligand subunits. Interacts with TMEM102; this interaction occurs preferentially in the absence of CSF2. Interacts with FCER1G; this interaction is direct. Interacts with LYN. Interacts with JAK1. In terms of processing, may be phosphorylated by LYN.

The protein resides in the membrane. Cell surface receptor that plays a role in immune response and controls the production and differentiation of hematopoietic progenitor cells into lineage-restricted cells. Acts by forming an heterodimeric receptor through interaction with different partners such as IL3RA, IL5RA or CSF2RA. In turn, participates in various signaling pathways including interleukin-3, interleukin-5 and granulocyte-macrophage colony-stimulating factor/CSF2 pathways. In unstimulated conditions, interacts constitutively with JAK1 and ligand binding leads to JAK1 stimulation and subsequent activation of the JAK-STAT pathway. The protein is Cytokine receptor common subunit beta (CSF2RB) of Homo sapiens (Human).